We begin with the raw amino-acid sequence, 858 residues long: DNA mismatch repair protein MutS (858 aa).

Residue 618–625 participates in ATP binding; the sequence is GPNMGGKS.

The protein belongs to the DNA mismatch repair MutS family.

In terms of biological role, this protein is involved in the repair of mismatches in DNA. It is possible that it carries out the mismatch recognition step. This protein has a weak ATPase activity. The protein is DNA mismatch repair protein MutS of Shewanella woodyi (strain ATCC 51908 / MS32).